Consider the following 74-residue polypeptide: uncharacterized protein (74 aa).

This is an uncharacterized protein from Avena sativa (Oat).